Reading from the N-terminus, the 119-residue chain is Large ribosomal subunit protein uL24 (119 aa).

The protein belongs to the universal ribosomal protein uL24 family. As to quaternary structure, part of the 50S ribosomal subunit.

Its function is as follows. One of two assembly initiator proteins, it binds directly to the 5'-end of the 23S rRNA, where it nucleates assembly of the 50S subunit. In terms of biological role, located at the polypeptide exit tunnel on the outside of the subunit. This chain is Large ribosomal subunit protein uL24, found in Methanococcus vannielii.